A 180-amino-acid polypeptide reads, in one-letter code: Acireductone dioxygenase (180 aa).

Residues histidine 97, histidine 99, glutamate 103, and histidine 141 each contribute to the Fe(2+) site. Ni(2+) contacts are provided by histidine 97, histidine 99, glutamate 103, and histidine 141.

It belongs to the acireductone dioxygenase (ARD) family. In terms of assembly, monomer. Fe(2+) is required as a cofactor. Requires Ni(2+) as cofactor.

It carries out the reaction 1,2-dihydroxy-5-(methylsulfanyl)pent-1-en-3-one + O2 = 3-(methylsulfanyl)propanoate + CO + formate + 2 H(+). The catalysed reaction is 1,2-dihydroxy-5-(methylsulfanyl)pent-1-en-3-one + O2 = 4-methylsulfanyl-2-oxobutanoate + formate + 2 H(+). It functions in the pathway amino-acid biosynthesis; L-methionine biosynthesis via salvage pathway; L-methionine from S-methyl-5-thio-alpha-D-ribose 1-phosphate: step 5/6. In terms of biological role, catalyzes 2 different reactions between oxygen and the acireductone 1,2-dihydroxy-3-keto-5-methylthiopentene (DHK-MTPene) depending upon the metal bound in the active site. Fe-containing acireductone dioxygenase (Fe-ARD) produces formate and 2-keto-4-methylthiobutyrate (KMTB), the alpha-ketoacid precursor of methionine in the methionine recycle pathway. Ni-containing acireductone dioxygenase (Ni-ARD) produces methylthiopropionate, carbon monoxide and formate, and does not lie on the methionine recycle pathway. This Klebsiella pneumoniae subsp. pneumoniae (strain ATCC 700721 / MGH 78578) protein is Acireductone dioxygenase.